Here is a 137-residue protein sequence, read N- to C-terminus: Large ribosomal subunit protein uL11 (137 aa).

This sequence belongs to the universal ribosomal protein uL11 family. As to quaternary structure, part of the ribosomal stalk of the 50S ribosomal subunit. Interacts with L10 and the large rRNA to form the base of the stalk. L10 forms an elongated spine to which L12 dimers bind in a sequential fashion forming a multimeric L10(L12)X complex. One or more lysine residues are methylated.

Forms part of the ribosomal stalk which helps the ribosome interact with GTP-bound translation factors. This chain is Large ribosomal subunit protein uL11, found in Mycoplasma pneumoniae (strain ATCC 29342 / M129 / Subtype 1) (Mycoplasmoides pneumoniae).